The sequence spans 72 residues: Large ribosomal subunit protein uL29 (72 aa).

It belongs to the universal ribosomal protein uL29 family.

This Chlamydia caviae (strain ATCC VR-813 / DSM 19441 / 03DC25 / GPIC) (Chlamydophila caviae) protein is Large ribosomal subunit protein uL29.